Consider the following 276-residue polypeptide: Adenylate kinase (276 aa).

38-43 (GSGKGT) provides a ligand contact to ATP. The tract at residues 58 to 87 (STGDMLRAAIEQGTETGKQAKTIMDQGGLV) is NMP. Residues threonine 59, arginine 64, 85 to 87 (GLV), 113 to 116 (GFPR), and glutamine 120 contribute to the AMP site. The tract at residues 154–191 (GRLVHPSSGRSYHREFFPPKVDMIDDITGEPLIQRSDD) is LID. ATP-binding positions include arginine 155 and 164–165 (SY). Arginine 188 and arginine 199 together coordinate AMP. Lysine 227 provides a ligand contact to ATP.

Belongs to the adenylate kinase family. AK2 subfamily. In terms of assembly, monomer.

The protein localises to the cytoplasm. The protein resides in the cytosol. It localises to the mitochondrion intermembrane space. The catalysed reaction is AMP + ATP = 2 ADP. Catalyzes the reversible transfer of the terminal phosphate group between ATP and AMP. Plays an important role in cellular energy homeostasis and in adenine nucleotide metabolism. Adenylate kinase activity is critical for regulation of the phosphate utilization and the AMP de novo biosynthesis pathways. The sequence is that of Adenylate kinase (adkA) from Dictyostelium discoideum (Social amoeba).